Consider the following 240-residue polypeptide: Ribosomal RNA small subunit methyltransferase G (240 aa).

S-adenosyl-L-methionine contacts are provided by residues G80, F85, 103–105 (DSS), 131–132 (AE), and R150.

Belongs to the methyltransferase superfamily. RNA methyltransferase RsmG family.

Its subcellular location is the cytoplasm. In terms of biological role, specifically methylates the N7 position of a guanine in 16S rRNA. The chain is Ribosomal RNA small subunit methyltransferase G from Thermoanaerobacter sp. (strain X514).